Consider the following 533-residue polypeptide: MGKMRVRFPTLVLVLGIVFLMAVSIGIAYGEKDVLKSHERPEEREQEEWQPRRQRPQSRREEREQEQEQGSPSYPRRQSGYERRQYHERSEQREEREQEQQQGSPSYSRRQRNPYHFSSQRFQTLYKNRNGKIRVLERFDQRTNRLENLQNYRIVEFQSKPNTLILPKHSDADYVLVVLNGRATITIVNPDRRQAYNLEYGDALRIPAGSTSYILNPDDNQKLRVVKLAIPINNPGYFYDFYPSSTKDQQSYFSGFSRNTLEATFNTRYEEIQRIILGNEDEQEYEEQRRGQEQSDQDEGVIVIVSKKQIQKLTKHAQSSSGKDKPSDSGPFNLRSNEPIYSNKYGNFYEITPDRNPQVQDLNISLTYIKINEGALLLPHYNSKAIYVVVVDEGEGNYELVGIRDQQRQQDEQEEKEEEVIRYSARLSEGDIFVIPAGYPISINASSNLRLLGFGINADENQRNFLAGSKDNVIRQLDRAVNELTFPGSAEDIERLIKNQQQSYFANGQPQQQQQQQSEKEGRRGRRGSSLPF.

The N-terminal stretch at 1–30 is a signal peptide; that stretch reads MGKMRVRFPTLVLVLGIVFLMAVSIGIAYG. A propeptide spanning residues 31 to 108 is cleaved from the precursor; that stretch reads EKDVLKSHER…EQQQGSPSYS (78 aa). Composition is skewed to basic and acidic residues over residues 37-51 and 79-99; these read SHER…EWQP and SGYE…REQE. Disordered stretches follow at residues 37–123 and 315–337; these read SHER…QRFQ and KHAQ…LRSN. Cupin type-1 domains lie at 115–273 and 332–494; these read YHFS…EEIQ and FNLR…EDIE. Residues Asn-363 and Asn-444 are each glycosylated (N-linked (GlcNAc...) asparagine). The segment at 503–533 is disordered; it reads SYFANGQPQQQQQQQSEKEGRRGRRGSSLPF.

This sequence belongs to the 7S seed storage protein family. As to quaternary structure, multimers. Give rise to a complex array of processed forms, due to a large number of processing sites and changes in glycosylation.

Seed storage protein. Accumulates during seed development and is hydrolyzed after germination to provide a carbon and nitrogen source for the developing seedling. In terms of biological role, has a lectin-like activity. This Lupinus albus (White lupine) protein is Conglutin beta 2.